We begin with the raw amino-acid sequence, 338 residues long: Heat-inducible transcription repressor HrcA (338 aa).

Belongs to the HrcA family.

Its function is as follows. Negative regulator of class I heat shock genes (grpE-dnaK-dnaJ and groELS operons). Prevents heat-shock induction of these operons. This chain is Heat-inducible transcription repressor HrcA, found in Bacillus cereus (strain B4264).